We begin with the raw amino-acid sequence, 286 residues long: Flagellin FlaB2 (286 aa).

It belongs to the bacterial flagellin family. The flagellum consists of an outer layer composed of repeating units of FlaA around a core that contains several antigenically related polypeptides. Interacts with FliW; a synthetic peptide of FlaB1 (residues 229-247) partially blocks binding of this protein to FliW.

The protein resides in the periplasmic flagellum. The protein localises to the periplasm. Its function is as follows. Component of the core of the flagella. This Treponema pallidum (strain Nichols) protein is Flagellin FlaB2.